We begin with the raw amino-acid sequence, 351 residues long: Transcription factor Atoh1 (351 aa).

Disordered regions lie at residues 16-39 and 89-116; these read LGDHHRHPQPHHVPPLTPQPPATL and EAAAPRDEADSQGELVRRSGCGGLSKSP. Residues 26–36 show a composition bias toward pro residues; the sequence is HHVPPLTPQPP. Residues 156–208 form the bHLH domain; sequence QRRLAANARERRRMHGLNHAFDQLRNVIPSFNNDKKLSKYETLQMAQIYINAL. 2 disordered regions span residues 244–278 and 308–351; these read GAGASAVAGAQPAPGGGPRPTPPGPCRTRFSGPAS and LSPS…DEAS. A compositionally biased stretch (low complexity) spans 247–256; the sequence is ASAVAGAQPA. Residues 258–268 are compositionally biased toward pro residues; sequence GGGPRPTPPGP. Basic and acidic residues predominate over residues 332-351; sequence HRSDGEFSPHSHYSDSDEAS.

Efficient DNA binding requires dimerization with another bHLH protein. As to expression, developing nervous system, and in adult epithelial cells of the gastrointestinal tract.

The protein resides in the nucleus. Its function is as follows. Transcriptional regulator. Activates E box-dependent transcription in collaboration with TCF3/E47, but the activity is completely antagonized by the negative regulator of neurogenesis HES1. Plays a role in the differentiation of subsets of neural cells by activating E box-dependent transcription. This chain is Transcription factor Atoh1, found in Mus musculus (Mouse).